A 793-amino-acid chain; its full sequence is Probable phosphoketolase (793 aa).

The protein belongs to the XFP family. Requires thiamine diphosphate as cofactor.

The sequence is that of Probable phosphoketolase from Rhodopirellula baltica (strain DSM 10527 / NCIMB 13988 / SH1).